The sequence spans 156 residues: Small ribosomal subunit protein uS7 (156 aa).

The protein belongs to the universal ribosomal protein uS7 family. As to quaternary structure, part of the 30S ribosomal subunit. Contacts proteins S9 and S11.

Its function is as follows. One of the primary rRNA binding proteins, it binds directly to 16S rRNA where it nucleates assembly of the head domain of the 30S subunit. Is located at the subunit interface close to the decoding center, probably blocks exit of the E-site tRNA. In Aeromonas salmonicida (strain A449), this protein is Small ribosomal subunit protein uS7.